The primary structure comprises 154 residues: Myoglobin (154 aa).

Positions 2–148 constitute a Globin domain; the sequence is GLSDGEWQLV…FRNDIAAKYK (147 aa). Ser4 bears the Phosphoserine mark. His65 lines the nitrite pocket. Residue His65 participates in O2 binding. Thr68 bears the Phosphothreonine mark. His94 lines the heme b pocket.

As to quaternary structure, monomer.

The protein localises to the cytoplasm. The protein resides in the sarcoplasm. The enzyme catalyses Fe(III)-heme b-[protein] + nitric oxide + H2O = Fe(II)-heme b-[protein] + nitrite + 2 H(+). It catalyses the reaction H2O2 + AH2 = A + 2 H2O. Monomeric heme protein which primary function is to store oxygen and facilitate its diffusion within muscle tissues. Reversibly binds oxygen through a pentacoordinated heme iron and enables its timely and efficient release as needed during periods of heightened demand. Depending on the oxidative conditions of tissues and cells, and in addition to its ability to bind oxygen, it also has a nitrite reductase activity whereby it regulates the production of bioactive nitric oxide. Under stress conditions, like hypoxia and anoxia, it also protects cells against reactive oxygen species thanks to its pseudoperoxidase activity. In Hystrix cristata (North African crested porcupine), this protein is Myoglobin.